Here is a 366-residue protein sequence, read N- to C-terminus: Chorismate synthase (366 aa).

Residues arginine 48 and arginine 54 each contribute to the NADP(+) site. Residues 125-127, 238-239, glycine 278, 293-297, and arginine 319 each bind FMN; these read RSS, NA, and KPTSS.

It belongs to the chorismate synthase family. Homotetramer. Requires FMNH2 as cofactor.

It catalyses the reaction 5-O-(1-carboxyvinyl)-3-phosphoshikimate = chorismate + phosphate. It functions in the pathway metabolic intermediate biosynthesis; chorismate biosynthesis; chorismate from D-erythrose 4-phosphate and phosphoenolpyruvate: step 7/7. Its function is as follows. Catalyzes the anti-1,4-elimination of the C-3 phosphate and the C-6 proR hydrogen from 5-enolpyruvylshikimate-3-phosphate (EPSP) to yield chorismate, which is the branch point compound that serves as the starting substrate for the three terminal pathways of aromatic amino acid biosynthesis. This reaction introduces a second double bond into the aromatic ring system. This chain is Chorismate synthase, found in Neisseria gonorrhoeae (strain ATCC 700825 / FA 1090).